Here is a 48-residue protein sequence, read N- to C-terminus: Large ribosomal subunit protein bL32 (48 aa).

The segment covering 1–20 (MAVPKRRVSKTRAAKRRTHY) has biased composition (basic residues). A disordered region spans residues 1–48 (MAVPKRRVSKTRAAKRRTHYKVSLPMPIKDKDGSYKMPHRANPTTKEY).

The protein belongs to the bacterial ribosomal protein bL32 family.

The chain is Large ribosomal subunit protein bL32 (rpmF) from Campylobacter jejuni subsp. jejuni serotype O:2 (strain ATCC 700819 / NCTC 11168).